The following is a 301-amino-acid chain: MDLKVVVSLSSRLYTDEIAKMQQRIGCILPLASTHGTQNVQGLGLGQVYSLETVPDYVSMYNYLSDCTLAVLDEVSVDSLILTKIVPGQTYAIKNKYQPFFQWHGTGSLSVMPPVFGREHATVKLESNDVDIVFPMVLPTPIAEEVLQKILLFNVYSRVVMQAPGNADMLDVHMHLGSVSYLGHHYELALPEVPGPLGLALLDNLSLYFCIMVTLLPRASMRLVRGLIRHEHHDLLNLFQEMVPDEIARIDLDDLSVADDLSRMRVMMTYLQSLASLFNLGPRLATAAYSQETLTATCWLR.

It belongs to the herpesviridae TRX2 protein family. As to quaternary structure, interacts with TRX1 and major capisd protein/MCP.

It is found in the virion. The protein resides in the host nucleus. Structural component of the T=16 icosahedral capsid. The capsid is composed of pentamers and hexamers of major capsid protein/MCP, which are linked together by heterotrimers called triplexes. These triplexes are formed by a single molecule of triplex protein 1/TRX1 and two copies of triplex protein 2/TRX2. Additionally, TRX1 is required for efficient transport of TRX2 to the nucleus, which is the site of capsid assembly. This chain is Triplex capsid protein 2, found in Homo sapiens (Human).